The following is an 873-amino-acid chain: Leucine--tRNA ligase (873 aa).

Positions 42 to 52 (PYPSGKLHMGH) match the 'HIGH' region motif. The tract at residues 624-643 (PVEIGGTEKMSKSKNNGVDP) is disordered. The 'KMSKS' region signature appears at 632-636 (KMSKS). Residue K635 coordinates ATP.

This sequence belongs to the class-I aminoacyl-tRNA synthetase family.

The protein localises to the cytoplasm. The enzyme catalyses tRNA(Leu) + L-leucine + ATP = L-leucyl-tRNA(Leu) + AMP + diphosphate. In Pseudomonas aeruginosa (strain LESB58), this protein is Leucine--tRNA ligase.